We begin with the raw amino-acid sequence, 431 residues long: tRNA(Ile)-lysidine synthase (431 aa).

Residue 19–24 (STGIDS) participates in ATP binding.

Belongs to the tRNA(Ile)-lysidine synthase family.

Its subcellular location is the cytoplasm. The catalysed reaction is cytidine(34) in tRNA(Ile2) + L-lysine + ATP = lysidine(34) in tRNA(Ile2) + AMP + diphosphate + H(+). Functionally, ligates lysine onto the cytidine present at position 34 of the AUA codon-specific tRNA(Ile) that contains the anticodon CAU, in an ATP-dependent manner. Cytidine is converted to lysidine, thus changing the amino acid specificity of the tRNA from methionine to isoleucine. In Staphylococcus aureus (strain MRSA252), this protein is tRNA(Ile)-lysidine synthase.